The following is a 141-amino-acid chain: VLSPADKSNVKAAWGKVGGHAGDYGAEALERMFLSFPTTKTYFPHFDLSHGSAQVKGHGKKVADALTVAVAHVDDMPNALSALSDLHAHKLRVDPVNFKLLSHCLLVTLAAHLPADFTPAVHASLDKFLASVSTVLTSKYR.

Residues 1–141 (VLSPADKSNV…VSTVLTSKYR (141 aa)) form the Globin domain. Serine 3 is modified (phosphoserine). Lysine 7 and lysine 11 each carry N6-succinyllysine. Lysine 16 carries the post-translational modification N6-acetyllysine; alternate. Lysine 16 carries the N6-succinyllysine; alternate modification. The residue at position 24 (tyrosine 24) is a Phosphotyrosine. Serine 35 carries the phosphoserine modification. Lysine 40 is subject to N6-succinyllysine. Serine 49 carries the phosphoserine modification. Residue histidine 58 participates in O2 binding. Histidine 87 is a heme b binding site. Serine 102 carries the post-translational modification Phosphoserine. Position 108 is a phosphothreonine (threonine 108). 2 positions are modified to phosphoserine: serine 124 and serine 131. Phosphothreonine occurs at positions 134 and 137. At serine 138 the chain carries Phosphoserine.

This sequence belongs to the globin family. In terms of assembly, heterotetramer of two alpha chains and two beta chains. In terms of tissue distribution, red blood cells.

Its function is as follows. Involved in oxygen transport from the lung to the various peripheral tissues. In terms of biological role, hemopressin acts as an antagonist peptide of the cannabinoid receptor CNR1. Hemopressin-binding efficiently blocks cannabinoid receptor CNR1 and subsequent signaling. The polypeptide is Hemoglobin subunit alpha (HBA) (Leontocebus fuscicollis (Brown-mantled tamarin)).